The following is a 45-amino-acid chain: MRKRFFVGIFAINLLVGCQANYIRDVQGGTIAPSSSSKLTGIAVQ.

The first 17 residues, 1–17 (MRKRFFVGIFAINLLVG), serve as a signal peptide directing secretion. A lipid anchor (N-palmitoyl cysteine) is attached at C18. C18 carries the S-diacylglycerol cysteine lipid modification.

The protein localises to the cell outer membrane. In terms of biological role, lysis proteins are required for both colicin release and partial cell lysis. The polypeptide is Lysis protein for colicin E1 (lys) (Escherichia coli).